A 154-amino-acid polypeptide reads, in one-letter code: Actin-related protein 2/3 complex subunit 5 (154 aa).

T142 is modified (phosphothreonine).

The protein belongs to the ARPC5 family. In terms of assembly, component of the Arp2/3 complex composed of ARP2, ARP3, ARC40/p41-ARC, ARC35/p34-ARC, ARC18/p21-ARC, ARC19/p20-ARC and ARC16/p16-ARC.

It is found in the cytoplasm. It localises to the cytoskeleton. Its subcellular location is the actin patch. Its function is as follows. Functions as a component of the Arp2/3 complex which is involved in regulation of actin polymerization and together with an activating nucleation-promoting factor (NPF) mediates the formation of branched actin networks. In Saccharomyces cerevisiae (strain ATCC 204508 / S288c) (Baker's yeast), this protein is Actin-related protein 2/3 complex subunit 5 (ARC15).